Consider the following 334-residue polypeptide: Protein CUP-SHAPED COTYLEDON 3 (334 aa).

The NAC domain maps to 22 to 171 (LPPGFRFHPT…EWVICRVFNK (150 aa)). Residues 121 to 177 (VGMKKTLVFYKGRAPRGLKTKWVMHEYRLENDHSHRHTCKEEWVICRVFNKTGDRKN) mediate DNA binding.

In a general manner, present at the boundaries between mersitems and araising primordia.

The protein localises to the nucleus. Functionally, transcription activator. Involved in molecular mechanisms regulating shoot apical meristem (SAM) formation during embryogenesis and organ separation. Required for axillary meristem initiation and separation of the meristem from the main stem. May act as an inhibitor of cell division. The polypeptide is Protein CUP-SHAPED COTYLEDON 3 (NAC031) (Arabidopsis thaliana (Mouse-ear cress)).